We begin with the raw amino-acid sequence, 81 residues long: Photosystem I iron-sulfur center (81 aa).

2 consecutive 4Fe-4S ferredoxin-type domains span residues 2–31 (SHSVKIYDTCIGCTQCVRACPTDVLEMIPW) and 39–68 (IASAPRTEDCVGCKRCESACPTDFLSVRVY). [4Fe-4S] cluster is bound by residues Cys11, Cys14, Cys17, Cys21, Cys48, Cys51, Cys54, and Cys58.

The eukaryotic PSI reaction center is composed of at least 11 subunits. It depends on [4Fe-4S] cluster as a cofactor.

The protein localises to the plastid. It is found in the chloroplast thylakoid membrane. The enzyme catalyses reduced [plastocyanin] + hnu + oxidized [2Fe-2S]-[ferredoxin] = oxidized [plastocyanin] + reduced [2Fe-2S]-[ferredoxin]. Apoprotein for the two 4Fe-4S centers FA and FB of photosystem I (PSI); essential for photochemical activity. FB is the terminal electron acceptor of PSI, donating electrons to ferredoxin. The C-terminus interacts with PsaA/B/D and helps assemble the protein into the PSI complex. Required for binding of PsaD and PsaE to PSI. PSI is a plastocyanin-ferredoxin oxidoreductase, converting photonic excitation into a charge separation, which transfers an electron from the donor P700 chlorophyll pair to the spectroscopically characterized acceptors A0, A1, FX, FA and FB in turn. This Phaseolus vulgaris (Kidney bean) protein is Photosystem I iron-sulfur center.